We begin with the raw amino-acid sequence, 148 residues long: UPF0179 protein Mpal_0949 (148 aa).

Belongs to the UPF0179 family.

The chain is UPF0179 protein Mpal_0949 from Methanosphaerula palustris (strain ATCC BAA-1556 / DSM 19958 / E1-9c).